Here is a 280-residue protein sequence, read N- to C-terminus: Tryptophan synthase alpha chain (280 aa).

Residues glutamate 50 and aspartate 61 each act as proton acceptor in the active site.

It belongs to the TrpA family. As to quaternary structure, tetramer of two alpha and two beta chains.

It catalyses the reaction (1S,2R)-1-C-(indol-3-yl)glycerol 3-phosphate + L-serine = D-glyceraldehyde 3-phosphate + L-tryptophan + H2O. The protein operates within amino-acid biosynthesis; L-tryptophan biosynthesis; L-tryptophan from chorismate: step 5/5. Functionally, the alpha subunit is responsible for the aldol cleavage of indoleglycerol phosphate to indole and glyceraldehyde 3-phosphate. In Methylorubrum extorquens (strain CM4 / NCIMB 13688) (Methylobacterium extorquens), this protein is Tryptophan synthase alpha chain.